The sequence spans 299 residues: Pseudouridine-5'-phosphate glycosidase (299 aa).

Glu-23 functions as the Proton donor in the catalytic mechanism. Residues Lys-84 and Val-104 each coordinate substrate. Asp-136 provides a ligand contact to Mn(2+). Substrate is bound at residue 138–140; that stretch reads SAD. Catalysis depends on Lys-157, which acts as the Nucleophile.

Belongs to the pseudouridine-5'-phosphate glycosidase family. As to quaternary structure, homotrimer. Mn(2+) serves as cofactor.

It catalyses the reaction D-ribose 5-phosphate + uracil = psi-UMP + H2O. In terms of biological role, catalyzes the reversible cleavage of pseudouridine 5'-phosphate (PsiMP) to ribose 5-phosphate and uracil. Functions biologically in the cleavage direction, as part of a pseudouridine degradation pathway. This chain is Pseudouridine-5'-phosphate glycosidase, found in Solibacter usitatus (strain Ellin6076).